A 252-amino-acid chain; its full sequence is MVPSERGDVATAIRPAAADKLVHGPISDKKCRKKVPRKVHKSEREKLKRGHLNDLFGELGNMLEADRQSNGKACILTDTTRILRDLLSQVKSLRQENSTLQNESNYVTMERNELQDENGALRSEISDLQNELRMRATGSPGWGHGATGSPLPVPPSPGTVFPSQQPMQPSPMTTSTVFPLQQPLPQPTVIEPSARQPLELKLFLEAPPAEDPEPSEDQEAPNNVARPQPRYPTEASSWPISLGLPRMEDEQM.

Residues 36–49 (PRKVHKSEREKLKR) form a basic motif region. The bHLH domain maps to 36–86 (PRKVHKSEREKLKRGHLNDLFGELGNMLEADRQSNGKACILTDTTRILRDL). The segment at 50 to 86 (GHLNDLFGELGNMLEADRQSNGKACILTDTTRILRDL) is helix-loop-helix motif. The stretch at 76 to 131 (LTDTTRILRDLLSQVKSLRQENSTLQNESNYVTMERNELQDENGALRSEISDLQNE) forms a coiled coil. The segment at 135-252 (RATGSPGWGH…GLPRMEDEQM (118 aa)) is disordered. The segment covering 162 to 176 (PSQQPMQPSPMTTST) has biased composition (low complexity). Residues 208–219 (PAEDPEPSEDQE) are compositionally biased toward acidic residues.

Belongs to the bHLH protein family.

Its subcellular location is the nucleus. Transcription factor that acts as a negative regulator of the iron deficiency response. Suppresses the induction of iron deficiency responsive genes, such as NAS1, NAS2, IRO2, IRT1, YSL15, and NRAMP1. This is Protein IRON-RELATED TRANSCRIPTION FACTOR 3 from Oryza sativa subsp. japonica (Rice).